The sequence spans 372 residues: Mitogen-activated protein kinase spk1 (372 aa).

The segment covering 1–25 (MASATSTPTIADGNSNKESVATSRS) has biased composition (polar residues). Positions 1–29 (MASATSTPTIADGNSNKESVATSRSPHTH) are disordered. In terms of domain architecture, Protein kinase spans 39-327 (YEMINLIGQG…AEEALKHPYV (289 aa)). Residues 45-53 (IGQGAYGVV) and Lys-68 contribute to the ATP site. Asp-163 serves as the catalytic Proton acceptor. At Thr-199 the chain carries Phosphothreonine. A TXY motif is present at residues 199 to 201 (TEY). A Phosphotyrosine modification is found at Tyr-201.

The protein belongs to the protein kinase superfamily. CMGC Ser/Thr protein kinase family. MAP kinase subfamily. Mg(2+) is required as a cofactor. Dually phosphorylated on Thr-199 and Tyr-201, which activates the enzyme.

It is found in the nucleus. It catalyses the reaction L-seryl-[protein] + ATP = O-phospho-L-seryl-[protein] + ADP + H(+). The enzyme catalyses L-threonyl-[protein] + ATP = O-phospho-L-threonyl-[protein] + ADP + H(+). With respect to regulation, activated by tyrosine and threonine phosphorylation. In terms of biological role, involved in mating signal transduction pathway. This chain is Mitogen-activated protein kinase spk1 (spk1), found in Schizosaccharomyces pombe (strain 972 / ATCC 24843) (Fission yeast).